Reading from the N-terminus, the 218-residue chain is Ras-related protein Rab-42 (218 aa).

Positions 19, 21, 22, 23, and 46 each coordinate GTP. Positions 23, 46, and 70 each coordinate Mg(2+). 5 residues coordinate GTP: glycine 73, lysine 130, aspartate 132, valine 160, and lysine 161. Residues cysteine 216 and cysteine 218 are each lipidated (S-geranylgeranyl cysteine).

This sequence belongs to the small GTPase superfamily. Rab family. The cofactor is Mg(2+).

It is found in the membrane. It catalyses the reaction GTP + H2O = GDP + phosphate + H(+). With respect to regulation, regulated by guanine nucleotide exchange factors (GEFs) which promote the exchange of bound GDP for free GTP. Regulated by GTPase activating proteins (GAPs) which increase the GTP hydrolysis activity. Inhibited by GDP dissociation inhibitors (GDIs). The small GTPases Rab are key regulators of intracellular membrane trafficking, from the formation of transport vesicles to their fusion with membranes. Rabs cycle between an inactive GDP-bound form and an active GTP-bound form that is able to recruit to membranes different sets of downstream effectors directly responsible for vesicle formation, movement, tethering and fusion. The physiological function of RAB42 remains undefined. The protein is Ras-related protein Rab-42 of Homo sapiens (Human).